Here is a 305-residue protein sequence, read N- to C-terminus: Oxygen-dependent coproporphyrinogen-III oxidase (305 aa).

Ser-98 is a binding site for substrate. Residues His-102 and His-112 each coordinate a divalent metal cation. The active-site Proton donor is His-112. Asn-114 to Arg-116 contacts substrate. Residues His-151 and His-181 each coordinate a divalent metal cation. An important for dimerization region spans residues Tyr-246–Glu-281. Residue Gly-264–Arg-266 coordinates substrate.

This sequence belongs to the aerobic coproporphyrinogen-III oxidase family. As to quaternary structure, homodimer. A divalent metal cation is required as a cofactor.

It is found in the cytoplasm. The catalysed reaction is coproporphyrinogen III + O2 + 2 H(+) = protoporphyrinogen IX + 2 CO2 + 2 H2O. It participates in porphyrin-containing compound metabolism; protoporphyrin-IX biosynthesis; protoporphyrinogen-IX from coproporphyrinogen-III (O2 route): step 1/1. Involved in the heme biosynthesis. Catalyzes the aerobic oxidative decarboxylation of propionate groups of rings A and B of coproporphyrinogen-III to yield the vinyl groups in protoporphyrinogen-IX. This is Oxygen-dependent coproporphyrinogen-III oxidase from Vibrio campbellii (strain ATCC BAA-1116).